The primary structure comprises 686 residues: MILSGKKRMLLDNYKNARAPGGDDERDWVFDRPAIVTRRDKSDRMAHPYIGIIPRTNIYSAVLDSYCKSLNPVYKERIPPVLGTGRDVPVTPANVTGELARAARALCGDLASGDPEALVEFASAVQTQRTSRGCPVFRELSEFLVNLASFLNRCYSVKSDTIEPFQKQLILHTFYFLISIKAPHAANTLFEVFKEYFGLFDMGREALQTFKQKSTVYLIPRRHGKTWIVVAIISMLLTSVENIHVGYVAHQKHVANSVFAEIINTIYRWFPAKNVYIKKENGTIMYTNENRRPSTLMCATCFNKNSIRGQTFNLLYVDEANFIKKDSLPSILGFMLQKDAKIIFISSVNSSDQTTSFLYNLKNAKEKMLNVVNYVCPQHREDFSLQESVVSCPCYRLHIPTYIAIDENIKDTTNLFMEGAFTTELMGDGAAATTQTNMHKVVGEPALVQFDLCRVDTGSPEAQRGLNPTLFLYVDPAYTNNTEASGTGMGAVVSMKNSDRCVVVGVEHFFLKELTGASSLQIASCAAALIRSLATLHPFVREAHVAIEGNSSQDSAVAIATLLHERSPLPVKFLHHADKATGVQWPMYILGAEKARAFETFIYALNSNTLSCGQAIVSNTIKLSFDPVAYLIEQIRAIKCYPLKDGTVSYCAKHKGGSDDTLVAVVMAHYFATSDRHVFKNHMKQI.

Positions 219 to 226 (IPRRHGKT) match the Walker A motif motif. Residues 314–319 (LLYVDE) carry the Walker B motif motif. Glu-319 serves as the catalytic For ATPase activity. Active-site for nuclease activity residues include Asp-475, Glu-548, and Asp-660.

Belongs to the herpesviridae TRM3 protein family. In terms of assembly, interacts with the terminase subunits TRM1 and TRM2. Interacts with portal protein.

The protein resides in the host nucleus. Component of the molecular motor that translocates viral genomic DNA in empty capsid during DNA packaging. Forms a tripartite terminase complex together with TRM1 and TRM2 in the host cytoplasm. Once the complex reaches the host nucleus, it interacts with the capsid portal vertex. This portal forms a ring in which genomic DNA is translocated into the capsid. TRM3 carries an RNase H-like nuclease activity that plays an important role for the cleavage of concatemeric viral DNA into unit length genomes. The chain is Tripartite terminase subunit 3 from Equine herpesvirus 2 (strain 86/87) (EHV-2).